Reading from the N-terminus, the 243-residue chain is Anti-sigma-K factor RskA (243 aa).

The Cytoplasmic portion of the chain corresponds to 1–102 (MTEPNNTDLL…RGGESRWRTA (102 aa)). Residues 103 to 123 (VLAAAAVAVVGLGALGVGLAL) traverse the membrane as a helical segment. At 124–243 (RPAVSPTTAD…SPAFAELPLT (120 aa)) the chain is on the extracellular side. A disordered region spans residues 223–243 (VEPPGGSQRPTSPAFAELPLT).

This sequence belongs to the anti-sigma-K factor family.

The protein localises to the cell membrane. In terms of biological role, an anti-sigma factor for extracytoplasmic function (ECF) sigma factor SigK. ECF sigma factors are held in an inactive form by an anti-sigma factor until released by regulated intramembrane proteolysis (RIP). RIP occurs when an extracytoplasmic signal triggers a concerted proteolytic cascade to transmit information and elicit cellular responses. The membrane-spanning regulatory substrate protein is first cut extracytoplasmically (site-1 protease, S1P), then within the membrane itself (site-2 protease, S2P, Rip1), while cytoplasmic proteases finish degrading the regulatory protein, liberating the sigma factor. This is Anti-sigma-K factor RskA (rskA) from Mycobacterium sp. (strain JLS).